Here is a 279-residue protein sequence, read N- to C-terminus: Lyso-glycine lipid O-acyltransferase (279 aa).

It belongs to the O-acyltransferase GlsA family.

The catalysed reaction is a lyso-glycine lipid + a fatty acyl-[ACP] = a glycine lipid + holo-[ACP]. It catalyses the reaction N-[(3R)-3-hydroxyhexadecanoyl]-glycine + hexadecanoyl-[ACP] = N-[(3R)-3-(hexadecanoyloxy)hexadecanoyl]-glycine + holo-[ACP]. Its pathway is lipid metabolism. Its function is as follows. Is involved in the production of glycine lipids (GL), which are phosphorus-free membrane lipids. Catalyzes the second step of GL biosynthesis, i.e. the O-acylation of the hydroxyl group of lyso-glycine lipids, resulting in the production of the mature diacylated glycine lipids. The polypeptide is Lyso-glycine lipid O-acyltransferase (Phocaeicola vulgatus (strain ATCC 8482 / DSM 1447 / JCM 5826 / CCUG 4940 / NBRC 14291 / NCTC 11154) (Bacteroides vulgatus)).